A 210-amino-acid chain; its full sequence is 3-phospho-D-glycerate guanylyltransferase (210 aa).

This sequence belongs to the CofC family.

It catalyses the reaction (2R)-3-phosphoglycerate + GTP + H(+) = 3-[(R)-glyceryl]-diphospho-5'-guanosine + diphosphate. Its pathway is cofactor biosynthesis; coenzyme F420 biosynthesis. In terms of biological role, guanylyltransferase that catalyzes the activation of (2R)-3-phosphoglycerate (3PG) as 3-[(R)-glyceryl]-diphospho-5'-guanosine, via the condensation of 3PG with GTP. It is involved in the biosynthesis of a derivative of the hydride carrier cofactor coenzyme F420, 3PG-F420. The protein is 3-phospho-D-glycerate guanylyltransferase of Colwellia psychrerythraea (strain 34H / ATCC BAA-681) (Vibrio psychroerythus).